The sequence spans 431 residues: Neuronal pentraxin-2 (431 aa).

A signal peptide spans 1–15 (MLALLAASVALAVAA). Asn148 and Asn189 each carry an N-linked (GlcNAc...) asparagine glycan. In terms of domain architecture, Pentraxin (PTX) spans 223 to 424 (DAFKVSLPLR…GASKWPVETC (202 aa)). Cys253 and Cys313 are oxidised to a cystine. The Ca(2+) site is built by Asn277, Glu355, Gln356, Asp357, and Gln367. Residue Asn393 is glycosylated (N-linked (GlcNAc...) asparagine).

Homooligomer or heterooligomer (probably pentamer) with neuronal pentraxin receptor (NPTXR). The cofactor is Ca(2+). As to expression, brain, pancreas, liver, heart and skeletal muscle. Highest levels are seen in the testis.

The protein resides in the secreted. Its function is as follows. Likely to play role in the modification of cellular properties that underlie long-term plasticity. Binds to agar matrix in a calcium-dependent manner. The polypeptide is Neuronal pentraxin-2 (NPTX2) (Homo sapiens (Human)).